A 415-amino-acid polypeptide reads, in one-letter code: Tyrosine--tRNA ligase (415 aa).

Tyrosine 40 serves as a coordination point for L-tyrosine. The short motif at 45–54 (ATAKSLHVGS) is the 'HIGH' region element. Tyrosine 178 and glutamine 182 together coordinate L-tyrosine. The 'KMSKS' region motif lies at 238–242 (KMGKS). Lysine 241 is a binding site for ATP. The region spanning 350–414 (ASIVQLIVKT…GKKRHALVQL (65 aa)) is the S4 RNA-binding domain.

The protein belongs to the class-I aminoacyl-tRNA synthetase family. TyrS type 1 subfamily. In terms of assembly, homodimer.

The protein resides in the cytoplasm. The catalysed reaction is tRNA(Tyr) + L-tyrosine + ATP = L-tyrosyl-tRNA(Tyr) + AMP + diphosphate + H(+). Functionally, catalyzes the attachment of tyrosine to tRNA(Tyr) in a two-step reaction: tyrosine is first activated by ATP to form Tyr-AMP and then transferred to the acceptor end of tRNA(Tyr). The sequence is that of Tyrosine--tRNA ligase from Ruegeria pomeroyi (strain ATCC 700808 / DSM 15171 / DSS-3) (Silicibacter pomeroyi).